The following is a 102-amino-acid chain: Small ribosomal subunit protein uS10 (102 aa).

Belongs to the universal ribosomal protein uS10 family. Part of the 30S ribosomal subunit.

In terms of biological role, involved in the binding of tRNA to the ribosomes. This Streptococcus thermophilus (strain CNRZ 1066) protein is Small ribosomal subunit protein uS10.